Here is a 248-residue protein sequence, read N- to C-terminus: Putative imidazole glycerol phosphate synthase subunit hisF2 (248 aa).

Asp129 is a catalytic residue.

The protein belongs to the HisA/HisF family. Heterodimer of HisH and HisF.

It is found in the cytoplasm. The catalysed reaction is 5-[(5-phospho-1-deoxy-D-ribulos-1-ylimino)methylamino]-1-(5-phospho-beta-D-ribosyl)imidazole-4-carboxamide + L-glutamine = D-erythro-1-(imidazol-4-yl)glycerol 3-phosphate + 5-amino-1-(5-phospho-beta-D-ribosyl)imidazole-4-carboxamide + L-glutamate + H(+). It functions in the pathway amino-acid biosynthesis; L-histidine biosynthesis; L-histidine from 5-phospho-alpha-D-ribose 1-diphosphate: step 5/9. Functionally, IGPS catalyzes the conversion of PRFAR and glutamine to IGP, AICAR and glutamate. The HisF subunit catalyzes the cyclization activity that produces IGP and AICAR from PRFAR using the ammonia provided by the HisH subunit. The chain is Putative imidazole glycerol phosphate synthase subunit hisF2 (hisF2) from Campylobacter jejuni subsp. jejuni serotype O:2 (strain ATCC 700819 / NCTC 11168).